A 135-amino-acid polypeptide reads, in one-letter code: ARGOS-like protein (135 aa).

An organ Size Related (OSR) domain region spans residues 71 to 122 (FSLESMVVLVGLTASLLILPLILPPLPPPPFMLLLIPIGIMVLLMVLAFMPS). 2 consecutive transmembrane segments (helical) span residues 76–96 (MVVL…LPPL) and 100–120 (PFML…LAFM).

This sequence belongs to the plant organ size related (OSR) protein family. As to expression, expressed in cotyledons, roots, flowers, siliques and leaves.

It is found in the membrane. The protein resides in the nucleus. It localises to the cytoplasm. Its subcellular location is the endoplasmic reticulum. Functionally, promotes cell expansion-dependent organ growth, probably via a brassinosteroids signaling pathway. Acts downstream of BRI1. In Arabidopsis thaliana (Mouse-ear cress), this protein is ARGOS-like protein (ARL).